A 230-amino-acid chain; its full sequence is MKILWLIILVNLFLSCGNESKEKSNLGLRLRELEISGGGSESKIEVYKEFIEKEDKNILKIVNSIDKKARFFNLIGLEFFKLGQYGPAIEYFAKNLEINPNNYLSHFYIGVASYNLAKNLRVKDEVEKYIILAENSFLKSLSIRDDFKDSLFAISNMYVYDLDKQLEAKNYLNKLGDMGEDYFEFLMLRGANYYSLGDLGNAILFYDKASKKASTEEQKEGVSRIMSNLK.

2 TPR repeats span residues 69-102 (ARFF…NPNN) and 183-216 (FEFL…ASTE).

This Borreliella burgdorferi (strain ATCC 35210 / DSM 4680 / CIP 102532 / B31) (Borrelia burgdorferi) protein is TPR repeat-containing protein BB_0298.